The following is a 233-amino-acid chain: MGQKVSPNVLRLGIVRDWENRWYAEKDQYVKWLDQDIKIRTALFKLLKDAAVSKIDIERTTKDLTLFIKTARPAIVLGQEGKNIEKIVLAVRKTVKNKKLIVNVRVIEIKSPDADATLVARWIGEQISNRASFRTVQKLAIKKALKAGAKGIKTAVSGRLGGVEMARTEGYLEGSVPLSTLRNNIDYALYEAPTTYGQIGVKVWINHGEVFKKERMNNSQIMAKPRTNKGGKR.

The region spanning 39 to 108 (IRTALFKLLK…KLIVNVRVIE (70 aa)) is the KH type-2 domain.

It belongs to the universal ribosomal protein uS3 family. Part of the 30S ribosomal subunit. Forms a tight complex with proteins S10 and S14.

Its function is as follows. Binds the lower part of the 30S subunit head. Binds mRNA in the 70S ribosome, positioning it for translation. This is Small ribosomal subunit protein uS3 from Mycoplasma mycoides subsp. mycoides SC (strain CCUG 32753 / NCTC 10114 / PG1).